The sequence spans 241 residues: Lactate utilization protein C (241 aa).

This sequence belongs to the LutC/YkgG family.

Its function is as follows. Is involved in L-lactate degradation and allows cells to grow with lactate as the sole carbon source. The polypeptide is Lactate utilization protein C (Geobacillus sp. (strain WCH70)).